The chain runs to 164 residues: Choriogonadotropin subunit beta (164 aa).

An N-terminal signal peptide occupies residues 1–20 (MEMLQGLLLCLLLSTGGAWA). 6 disulfides stabilise this stretch: cysteine 29-cysteine 77, cysteine 43-cysteine 92, cysteine 46-cysteine 130, cysteine 54-cysteine 108, cysteine 58-cysteine 110, and cysteine 113-cysteine 120. Asparagine 50 carries N-linked (GlcNAc...) asparagine glycosylation. Residues 135-164 (FQDSSSKDPPRNLTSPSQLLEPADPPLVPQ) are disordered. A glycan (O-linked (GalNAc...) serine) is linked at serine 140. Asparagine 146 carries N-linked (GlcNAc...) asparagine glycosylation. Serine 151 is a glycosylation site (O-linked (GalNAc...) serine).

The protein belongs to the glycoprotein hormones subunit beta family. In terms of assembly, heterodimer of a common alpha chain and a unique beta chain which confers biological specificity to thyrotropin, lutropin, follitropin and gonadotropin. In terms of tissue distribution, placenta.

The protein localises to the secreted. Its function is as follows. Stimulates the ovaries to synthesize the steroids that are essential for the maintenance of pregnancy. The polypeptide is Choriogonadotropin subunit beta (CGB) (Callithrix jacchus (White-tufted-ear marmoset)).